The sequence spans 96 residues: Protein RnfH (96 aa).

The protein belongs to the UPF0125 (RnfH) family.

This is Protein RnfH from Escherichia coli O81 (strain ED1a).